A 159-amino-acid chain; its full sequence is MTKTVIYPGTFDPITYGHLDIIERSAVLFPQVLVAVASNPTKKPLFELAERVRLAEESVAHLPNVQVIGFSDLLANVVKERHITAIIRGMRTTMDFEYELQLAHLNRALTDGVESLFLPSTEKWSYVSSTIVREIYLHRGDVSQFVPPPVLTALMEKNR.

Threonine 10 is a substrate binding site. ATP is bound by residues 10–11 (TF) and histidine 18. The substrate site is built by lysine 42, leucine 74, and arginine 88. ATP is bound by residues 89-91 (GMR), glutamate 99, and 124-130 (WSYVSST).

It belongs to the bacterial CoaD family. Homohexamer. Mg(2+) serves as cofactor.

Its subcellular location is the cytoplasm. The catalysed reaction is (R)-4'-phosphopantetheine + ATP + H(+) = 3'-dephospho-CoA + diphosphate. It participates in cofactor biosynthesis; coenzyme A biosynthesis; CoA from (R)-pantothenate: step 4/5. Functionally, reversibly transfers an adenylyl group from ATP to 4'-phosphopantetheine, yielding dephospho-CoA (dPCoA) and pyrophosphate. This chain is Phosphopantetheine adenylyltransferase, found in Mannheimia succiniciproducens (strain KCTC 0769BP / MBEL55E).